Reading from the N-terminus, the 181-residue chain is Regulator of G-protein signaling 5 (181 aa).

The region spanning serine 64–isoleucine 180 is the RGS domain.

The protein resides in the cytoplasm. The protein localises to the membrane. Inhibits signal transduction by increasing the GTPase activity of G protein alpha subunits thereby driving them into their inactive GDP-bound form. Binds to G(i)-alpha and G(o)-alpha, but not to G(s)-alpha. The sequence is that of Regulator of G-protein signaling 5 (Rgs5) from Rattus norvegicus (Rat).